A 798-amino-acid chain; its full sequence is Galactinol--sucrose galactosyltransferase (798 aa).

Belongs to the glycosyl hydrolases 36 family.

It catalyses the reaction alpha-D-galactosyl-(1-&gt;3)-1D-myo-inositol + sucrose = raffinose + myo-inositol. Its activity is regulated as follows. Inhibited by 1-deoxygalactonojirimycin. Not inhibited by stachyose. Strong inhibition of the hydrolytic activity by sucrose. Its function is as follows. Transglycosidase operating by a ping-pong reaction mechanism. Involved in the synthesis of raffinose, a major soluble carbohydrate in seeds, roots and tubers. Able to utilize D-ononitol and D-pinitol as acceptors. May also act as a glycoside hydrolase. The polypeptide is Galactinol--sucrose galactosyltransferase (RFS) (Pisum sativum (Garden pea)).